The sequence spans 485 residues: Aspartyl/glutamyl-tRNA(Asn/Gln) amidotransferase subunit B (485 aa).

It belongs to the GatB/GatE family. GatB subfamily. Heterotrimer of A, B and C subunits.

The enzyme catalyses L-glutamyl-tRNA(Gln) + L-glutamine + ATP + H2O = L-glutaminyl-tRNA(Gln) + L-glutamate + ADP + phosphate + H(+). The catalysed reaction is L-aspartyl-tRNA(Asn) + L-glutamine + ATP + H2O = L-asparaginyl-tRNA(Asn) + L-glutamate + ADP + phosphate + 2 H(+). In terms of biological role, allows the formation of correctly charged Asn-tRNA(Asn) or Gln-tRNA(Gln) through the transamidation of misacylated Asp-tRNA(Asn) or Glu-tRNA(Gln) in organisms which lack either or both of asparaginyl-tRNA or glutaminyl-tRNA synthetases. The reaction takes place in the presence of glutamine and ATP through an activated phospho-Asp-tRNA(Asn) or phospho-Glu-tRNA(Gln). This chain is Aspartyl/glutamyl-tRNA(Asn/Gln) amidotransferase subunit B, found in Borrelia garinii subsp. bavariensis (strain ATCC BAA-2496 / DSM 23469 / PBi) (Borreliella bavariensis).